The chain runs to 359 residues: Putative nucleotidyltransferase MAB21L1 (359 aa).

A ribonucleoside 5'-triphosphate-binding positions include 23–24 (RK) and 63–66 (YEGL). The Mg(2+) site is built by glutamate 73 and glutamate 75. A ribonucleoside 5'-triphosphate contacts are provided by residues lysine 248 and 252–255 (SLLK).

This sequence belongs to the mab-21 family. In terms of assembly, monomer. Homodecamer; composed of 2 back to back homopentamers. The protein may exist as monomer in solution and oiligomerizes upon ligand binding.

It is found in the nucleus. Putative nucleotidyltransferase required for several aspects of embryonic development including normal development of the eye. It is unclear whether it displays nucleotidyltransferase activity in vivo. Binds single-stranded RNA (ssRNA). The polypeptide is Putative nucleotidyltransferase MAB21L1 (mab21l1) (Xenopus tropicalis (Western clawed frog)).